The chain runs to 371 residues: Aminomethyltransferase (371 aa).

This sequence belongs to the GcvT family. As to quaternary structure, the glycine cleavage system is composed of four proteins: P, T, L and H.

The catalysed reaction is N(6)-[(R)-S(8)-aminomethyldihydrolipoyl]-L-lysyl-[protein] + (6S)-5,6,7,8-tetrahydrofolate = N(6)-[(R)-dihydrolipoyl]-L-lysyl-[protein] + (6R)-5,10-methylene-5,6,7,8-tetrahydrofolate + NH4(+). Functionally, the glycine cleavage system catalyzes the degradation of glycine. This Leptospira borgpetersenii serovar Hardjo-bovis (strain JB197) protein is Aminomethyltransferase.